A 489-amino-acid chain; its full sequence is Dihydropyrimidinase 1 (489 aa).

Zn(2+)-binding residues include His-61, His-63, and Lys-156. An N6-carboxylysine modification is found at Lys-156. Position 161 (Tyr-161) interacts with substrate. 2 residues coordinate Zn(2+): His-189 and His-245. Ser-295 contributes to the substrate binding site. A Zn(2+)-binding site is contributed by Asp-323. Asn-344 is a substrate binding site.

This sequence belongs to the metallo-dependent hydrolases superfamily. Hydantoinase/dihydropyrimidinase family. Homotetramer. The cofactor is Zn(2+). Carboxylation allows a single lysine to coordinate two zinc ions.

Its subcellular location is the nucleus. The catalysed reaction is 5,6-dihydrouracil + H2O = 3-(carbamoylamino)propanoate + H(+). The sequence is that of Dihydropyrimidinase 1 (dhp-1) from Caenorhabditis briggsae.